Here is a 296-residue protein sequence, read N- to C-terminus: tRNA pseudouridine synthase B (296 aa).

Asp38 (nucleophile) is an active-site residue.

It belongs to the pseudouridine synthase TruB family. Type 1 subfamily.

It catalyses the reaction uridine(55) in tRNA = pseudouridine(55) in tRNA. Functionally, responsible for synthesis of pseudouridine from uracil-55 in the psi GC loop of transfer RNAs. This Ehrlichia ruminantium (strain Gardel) protein is tRNA pseudouridine synthase B.